The primary structure comprises 468 residues: Ribulose bisphosphate carboxylase large chain (468 aa).

At Lys-5 the chain carries N6,N6,N6-trimethyllysine. Positions 114 and 164 each coordinate substrate. The Proton acceptor role is filled by Lys-166. Lys-168 serves as a coordination point for substrate. Mg(2+) is bound by residues Lys-192, Asp-194, and Glu-195. Lys-192 bears the N6-carboxylysine mark. Catalysis depends on His-285, which acts as the Proton acceptor. Residues Arg-286, His-318, and Ser-370 each contribute to the substrate site.

This sequence belongs to the RuBisCO large chain family. Type I subfamily. Heterohexadecamer of 8 large chains and 8 small chains; disulfide-linked. The disulfide link is formed within the large subunit homodimers. It depends on Mg(2+) as a cofactor. Post-translationally, the disulfide bond which can form in the large chain dimeric partners within the hexadecamer appears to be associated with oxidative stress and protein turnover.

The protein localises to the plastid. It is found in the chloroplast. It carries out the reaction 2 (2R)-3-phosphoglycerate + 2 H(+) = D-ribulose 1,5-bisphosphate + CO2 + H2O. It catalyses the reaction D-ribulose 1,5-bisphosphate + O2 = 2-phosphoglycolate + (2R)-3-phosphoglycerate + 2 H(+). In terms of biological role, ruBisCO catalyzes two reactions: the carboxylation of D-ribulose 1,5-bisphosphate, the primary event in carbon dioxide fixation, as well as the oxidative fragmentation of the pentose substrate in the photorespiration process. Both reactions occur simultaneously and in competition at the same active site. The chain is Ribulose bisphosphate carboxylase large chain from Anthocercis viscosa (Sticky tailflower).